Reading from the N-terminus, the 281-residue chain is Glycerol uptake facilitator protein (281 aa).

The Cytoplasmic portion of the chain corresponds to 1–5 (MSQTS). A helical transmembrane segment spans residues 6–34 (TLKGQCIAEFLGTGLLIFFGVGCVAALKV). Over 35 to 39 (AGASF) the chain is Periplasmic. A helical membrane pass occupies residues 40–60 (GQWEISVIWGLGVAMAIYLTA). Residues 61 to 63 (GVS) lie on the Cytoplasmic side of the membrane. The stretch at 64-67 (GAHL) is an intramembrane region. An NPA 1 motif is present at residues 68-70 (NPA). The helical intramembrane region spans 68-78 (NPAVTIALWLF). Topologically, residues 79-84 (ACFDKR) are cytoplasmic. A helical transmembrane segment spans residues 85 to 108 (KVIPFIVSQVAGAFCAAALVYGLY). The Periplasmic segment spans residues 109 to 143 (YNLFFDFEQTHHIVRGSVESVDLAGTFSTYPNPHI). A helical transmembrane segment spans residues 144–169 (NFVQAFAVEMVITAILMGLILALTDD). Topologically, residues 170 to 177 (GNGVPRGP) are cytoplasmic. The helical transmembrane segment at 178–194 (LAPLLIGLLIAVIGASM) threads the bilayer. Residues 195–198 (GPLT) lie on the Periplasmic side of the membrane. Residues 199–202 (GFAM) lie within the membrane without spanning it. Residues 203–205 (NPA) carry the NPA 2 motif. The helical intramembrane region spans 203–216 (NPARDFGPKVFAWL). Over 217–231 (AGWGNVAFTGGRDIP) the chain is Periplasmic. A helical membrane pass occupies residues 232–254 (YFLVPLFSPIVGAIVGAFAYRKL). The Cytoplasmic portion of the chain corresponds to 255-281 (IGRHLPCDICVVEEKETTTPSEQKASL).

This sequence belongs to the MIP/aquaporin (TC 1.A.8) family. As to quaternary structure, homotetramer.

Its subcellular location is the cell inner membrane. It catalyses the reaction glycerol(in) = glycerol(out). Its function is as follows. Mediates glycerol diffusion across the cytoplasmic membrane via a pore-type mechanism. The polypeptide is Glycerol uptake facilitator protein (glpF) (Shigella flexneri).